The chain runs to 231 residues: NADH-ubiquinone oxidoreductase chain 4 (231 aa).

Helical transmembrane passes span 1–21 (PIAG…YGII), 34–54 (TFLP…LTCL), 61–80 (SLIA…AIII), 84–106 (WGLS…LFCL), 118–138 (ILIL…WWLL), and 156–178 (LLIM…LSML).

The protein belongs to the complex I subunit 4 family.

It localises to the mitochondrion membrane. The catalysed reaction is a ubiquinone + NADH + 5 H(+)(in) = a ubiquinol + NAD(+) + 4 H(+)(out). In terms of biological role, core subunit of the mitochondrial membrane respiratory chain NADH dehydrogenase (Complex I) that is believed to belong to the minimal assembly required for catalysis. Complex I functions in the transfer of electrons from NADH to the respiratory chain. The immediate electron acceptor for the enzyme is believed to be ubiquinone. The sequence is that of NADH-ubiquinone oxidoreductase chain 4 (MT-ND4) from Trimeresurus albolabris (White-lipped pit viper).